Here is a 333-residue protein sequence, read N- to C-terminus: tRNA N6-adenosine threonylcarbamoyltransferase (333 aa).

2 residues coordinate Fe cation: His111 and His115. Substrate is bound by residues 134 to 138 (LVSGG), Asp167, Gly180, and Asn272. Asp300 provides a ligand contact to Fe cation.

The protein belongs to the KAE1 / TsaD family. Requires Fe(2+) as cofactor.

It is found in the cytoplasm. It catalyses the reaction L-threonylcarbamoyladenylate + adenosine(37) in tRNA = N(6)-L-threonylcarbamoyladenosine(37) in tRNA + AMP + H(+). Required for the formation of a threonylcarbamoyl group on adenosine at position 37 (t(6)A37) in tRNAs that read codons beginning with adenine. Is involved in the transfer of the threonylcarbamoyl moiety of threonylcarbamoyl-AMP (TC-AMP) to the N6 group of A37, together with TsaE and TsaB. TsaD likely plays a direct catalytic role in this reaction. The chain is tRNA N6-adenosine threonylcarbamoyltransferase from Legionella pneumophila (strain Paris).